A 458-amino-acid chain; its full sequence is Probable M18 family aminopeptidase 1 (458 aa).

Residues H95, H170, and H434 each coordinate Zn(2+).

It belongs to the peptidase M18 family. The cofactor is Zn(2+).

The chain is Probable M18 family aminopeptidase 1 from Borrelia garinii subsp. bavariensis (strain ATCC BAA-2496 / DSM 23469 / PBi) (Borreliella bavariensis).